The sequence spans 23 residues: Paralytic peptide 2 (23 aa).

The cysteines at positions 7 and 19 are disulfide-linked.

Belongs to the GBP/PSP1/paralytic peptide family. In terms of tissue distribution, hemolymph.

Causes rapid, rigid paralysis when injected into Lepidopteran larvae. The physiological role may be to reduce hemolymph loss following injury and promote wound healing. The chain is Paralytic peptide 2 from Manduca sexta (Tobacco hawkmoth).